The sequence spans 243 residues: Probable septum site-determining protein MinC (243 aa).

Belongs to the MinC family. In terms of assembly, interacts with MinD and FtsZ.

Cell division inhibitor that blocks the formation of polar Z ring septums. Rapidly oscillates between the poles of the cell to destabilize FtsZ filaments that have formed before they mature into polar Z rings. Prevents FtsZ polymerization. In Agathobacter rectalis (strain ATCC 33656 / DSM 3377 / JCM 17463 / KCTC 5835 / VPI 0990) (Eubacterium rectale), this protein is Probable septum site-determining protein MinC.